The following is a 117-amino-acid chain: Large ribosomal subunit protein uL18 (117 aa).

It belongs to the universal ribosomal protein uL18 family. As to quaternary structure, part of the 50S ribosomal subunit; part of the 5S rRNA/L5/L18/L25 subcomplex. Contacts the 5S and 23S rRNAs.

This is one of the proteins that bind and probably mediate the attachment of the 5S RNA into the large ribosomal subunit, where it forms part of the central protuberance. This is Large ribosomal subunit protein uL18 from Phytoplasma australiense.